The chain runs to 124 residues: UPF0102 protein HEAR0176 (124 aa).

It belongs to the UPF0102 family.

The chain is UPF0102 protein HEAR0176 from Herminiimonas arsenicoxydans.